The primary structure comprises 590 residues: Arginine--tRNA ligase (590 aa).

The 'HIGH' region signature appears at 131-141; that stretch reads PNIAKEMHVGH.

It belongs to the class-I aminoacyl-tRNA synthetase family. In terms of assembly, monomer.

It localises to the cytoplasm. It carries out the reaction tRNA(Arg) + L-arginine + ATP = L-arginyl-tRNA(Arg) + AMP + diphosphate. This is Arginine--tRNA ligase from Synechococcus sp. (strain RCC307).